The primary structure comprises 80 residues: Exodeoxyribonuclease 7 small subunit (80 aa).

This sequence belongs to the XseB family. In terms of assembly, heterooligomer composed of large and small subunits.

The protein resides in the cytoplasm. The enzyme catalyses Exonucleolytic cleavage in either 5'- to 3'- or 3'- to 5'-direction to yield nucleoside 5'-phosphates.. In terms of biological role, bidirectionally degrades single-stranded DNA into large acid-insoluble oligonucleotides, which are then degraded further into small acid-soluble oligonucleotides. This is Exodeoxyribonuclease 7 small subunit from Citrobacter koseri (strain ATCC BAA-895 / CDC 4225-83 / SGSC4696).